A 450-amino-acid chain; its full sequence is NADP-specific glutamate dehydrogenase (450 aa).

The active site involves lysine 111.

Belongs to the Glu/Leu/Phe/Val dehydrogenases family. Homohexamer.

The catalysed reaction is L-glutamate + NADP(+) + H2O = 2-oxoglutarate + NH4(+) + NADPH + H(+). In Laccaria bicolor (strain S238N-H82 / ATCC MYA-4686) (Bicoloured deceiver), this protein is NADP-specific glutamate dehydrogenase (GDHA).